The chain runs to 174 residues: Adipose-secreted signaling protein (174 aa).

The residue at position 2 (Ala2) is an N-acetylalanine. Thr147 is subject to Phosphothreonine.

It belongs to the ADISSP family. As to expression, expression is adipose-specific and highly brown adipose tissue-enriched.

The protein resides in the secreted. In terms of biological role, adipocyte-secreted protein (adipokine) that acts as a key regulator for white adipose tissue (WAT) thermogenesis and glucose homeostasis at least in part through activation of protein kinase A (PKA). This chain is Adipose-secreted signaling protein, found in Mus musculus (Mouse).